The chain runs to 151 residues: Ribosome maturation factor RimP (151 aa).

It belongs to the RimP family.

The protein localises to the cytoplasm. In terms of biological role, required for maturation of 30S ribosomal subunits. This Shewanella putrefaciens (strain CN-32 / ATCC BAA-453) protein is Ribosome maturation factor RimP.